The sequence spans 101 residues: UPF0125 protein VC_0850 (101 aa).

The protein belongs to the UPF0125 (RnfH) family.

This is UPF0125 protein VC_0850 from Vibrio cholerae serotype O1 (strain ATCC 39315 / El Tor Inaba N16961).